The sequence spans 146 residues: Ribonuclease H (146 aa).

The RNase H type-1 domain occupies 1 to 143 (MEKKVTIYTD…CDELARLAVR (143 aa)). Mg(2+) contacts are provided by Asp10, Glu48, Asp70, and Asp135.

This sequence belongs to the RNase H family. As to quaternary structure, monomer. The cofactor is Mg(2+).

The protein localises to the cytoplasm. It carries out the reaction Endonucleolytic cleavage to 5'-phosphomonoester.. Endonuclease that specifically degrades the RNA of RNA-DNA hybrids. This chain is Ribonuclease H, found in Chlorobium phaeovibrioides (strain DSM 265 / 1930) (Prosthecochloris vibrioformis (strain DSM 265)).